The primary structure comprises 401 residues: S-adenosylmethionine synthase (401 aa).

137–142 (GEGSGD) lines the ATP pocket. Residues 272 to 305 (GTSAEQGDDGSVGRGNRSNGLITPNRSMSMEATS) are disordered. The span at 287 to 305 (NRSNGLITPNRSMSMEATS) shows a compositional bias: polar residues.

This sequence belongs to the AdoMet synthase 2 family. The cofactor is Mg(2+).

It catalyses the reaction L-methionine + ATP + H2O = S-adenosyl-L-methionine + phosphate + diphosphate. It participates in amino-acid biosynthesis; S-adenosyl-L-methionine biosynthesis; S-adenosyl-L-methionine from L-methionine: step 1/1. Its function is as follows. Catalyzes the formation of S-adenosylmethionine from methionine and ATP. The polypeptide is S-adenosylmethionine synthase (Natronomonas pharaonis (strain ATCC 35678 / DSM 2160 / CIP 103997 / JCM 8858 / NBRC 14720 / NCIMB 2260 / Gabara) (Halobacterium pharaonis)).